The primary structure comprises 500 residues: NAD(P)H-quinone oxidoreductase chain 4, chloroplastic (500 aa).

Transmembrane regions (helical) follow at residues 4 to 24, 31 to 51, 87 to 107, 111 to 131, 134 to 154, 167 to 187, 207 to 227, 242 to 262, 274 to 294, 305 to 325, 330 to 350, 358 to 378, 386 to 406, 416 to 436, and 462 to 482; these read LPWLTIIVILPISAGSSIPLF, IIRWYTLGICLLEFLLMTYTF, IGPISLTSFVTTLATLAAWPV, PRLFYFLMLAMYSGQVGLFAS, ILLFFLMWELELIPVYLLISM, FILYTAGGSIFISMGASSMGL, VVLEIVFYLGFFIAHAIKLPI, HYSTCMLLAGIPLKMGGYGLI, SLFSPWLVIVGAVQIIYAALT, IAYSSVSHMGFVIVGIGSMAD, GAILQMISHGLIGAALFFLAG, TLFLDGIGGMAIPMSKISTMF, LALPGMSGFVAESMVLLGIIT, IVIAAIMAIGMILTPIHLLSM, and IFISICLFLPVIGTGTYPDLV.

The protein belongs to the complex I subunit 4 family.

The protein resides in the plastid. It localises to the chloroplast thylakoid membrane. The enzyme catalyses a plastoquinone + NADH + (n+1) H(+)(in) = a plastoquinol + NAD(+) + n H(+)(out). The catalysed reaction is a plastoquinone + NADPH + (n+1) H(+)(in) = a plastoquinol + NADP(+) + n H(+)(out). This is NAD(P)H-quinone oxidoreductase chain 4, chloroplastic from Cycas taitungensis (Prince sago).